Consider the following 123-residue polypeptide: UPF0738 protein Bcer98_0913 (123 aa).

This sequence belongs to the UPF0738 family.

The polypeptide is UPF0738 protein Bcer98_0913 (Bacillus cytotoxicus (strain DSM 22905 / CIP 110041 / 391-98 / NVH 391-98)).